The following is a 229-amino-acid chain: PKHD-type hydroxylase RPD_3334 (229 aa).

The 103-residue stretch at Gln-78–Ser-180 folds into the Fe2OG dioxygenase domain. Fe cation-binding residues include His-98, Asp-100, and His-161. 2-oxoglutarate is bound at residue Arg-171.

Requires Fe(2+) as cofactor. L-ascorbate is required as a cofactor.

This chain is PKHD-type hydroxylase RPD_3334, found in Rhodopseudomonas palustris (strain BisB5).